We begin with the raw amino-acid sequence, 176 residues long: Large ribosomal subunit protein uL10 (176 aa).

The protein belongs to the universal ribosomal protein uL10 family. Part of the ribosomal stalk of the 50S ribosomal subunit. The N-terminus interacts with L11 and the large rRNA to form the base of the stalk. The C-terminus forms an elongated spine to which L12 dimers bind in a sequential fashion forming a multimeric L10(L12)X complex.

Forms part of the ribosomal stalk, playing a central role in the interaction of the ribosome with GTP-bound translation factors. The protein is Large ribosomal subunit protein uL10 of Thioalkalivibrio sulfidiphilus (strain HL-EbGR7).